The sequence spans 322 residues: HPr kinase/phosphorylase (322 aa).

Active-site residues include His142 and Lys163. Gly157–Ser164 is an ATP binding site. A Mg(2+)-binding site is contributed by Ser164. Asp181 (proton acceptor; for phosphorylation activity. Proton donor; for dephosphorylation activity) is an active-site residue. The important for the catalytic mechanism of both phosphorylation and dephosphorylation stretch occupies residues Met205–Asp214. Glu206 is a Mg(2+) binding site. The active site involves Arg247. Positions Pro268–Arg273 are important for the catalytic mechanism of dephosphorylation.

It belongs to the HPrK/P family. As to quaternary structure, homohexamer. Requires Mg(2+) as cofactor.

The catalysed reaction is [HPr protein]-L-serine + ATP = [HPr protein]-O-phospho-L-serine + ADP + H(+). It carries out the reaction [HPr protein]-O-phospho-L-serine + phosphate + H(+) = [HPr protein]-L-serine + diphosphate. In terms of biological role, catalyzes the ATP- as well as the pyrophosphate-dependent phosphorylation of a specific serine residue in HPr, a phosphocarrier protein of the phosphoenolpyruvate-dependent sugar phosphotransferase system (PTS). HprK/P also catalyzes the pyrophosphate-producing, inorganic phosphate-dependent dephosphorylation (phosphorolysis) of seryl-phosphorylated HPr (P-Ser-HPr). The two antagonistic activities of HprK/P are regulated by several intracellular metabolites, which change their concentration in response to the absence or presence of rapidly metabolisable carbon sources (glucose, fructose, etc.) in the growth medium. Therefore, by controlling the phosphorylation state of HPr, HPrK/P is a sensor enzyme that plays a major role in the regulation of carbon metabolism and sugar transport: it mediates carbon catabolite repression (CCR), and regulates PTS-catalyzed carbohydrate uptake and inducer exclusion. In Lactobacillus acidophilus (strain ATCC 700396 / NCK56 / N2 / NCFM), this protein is HPr kinase/phosphorylase.